The primary structure comprises 752 residues: Cation-transporting P-type ATPase B (752 aa).

The 64-residue stretch at R15–A78 folds into the HMA domain. Residues C26 and C29 each contribute to the a metal cation site. A run of 6 helical transmembrane segments spans residues L105–V125, G132–F152, M167–F187, A201–L221, I361–L381, and A390–T410. The 4-aspartylphosphate intermediate role is filled by D446. The next 2 helical transmembrane spans lie at M491–V511 and A714–F734.

It belongs to the cation transport ATPase (P-type) (TC 3.A.3) family. Type IB subfamily.

It localises to the cell membrane. The catalysed reaction is ATP + H2O = ADP + phosphate + H(+). This chain is Cation-transporting P-type ATPase B (ctpB), found in Mycobacterium tuberculosis (strain ATCC 25618 / H37Rv).